The chain runs to 191 residues: Leucyl/phenylalanyl-tRNA--protein transferase (191 aa).

It belongs to the L/F-transferase family.

The protein resides in the cytoplasm. It catalyses the reaction N-terminal L-lysyl-[protein] + L-leucyl-tRNA(Leu) = N-terminal L-leucyl-L-lysyl-[protein] + tRNA(Leu) + H(+). It carries out the reaction N-terminal L-arginyl-[protein] + L-leucyl-tRNA(Leu) = N-terminal L-leucyl-L-arginyl-[protein] + tRNA(Leu) + H(+). The catalysed reaction is L-phenylalanyl-tRNA(Phe) + an N-terminal L-alpha-aminoacyl-[protein] = an N-terminal L-phenylalanyl-L-alpha-aminoacyl-[protein] + tRNA(Phe). In terms of biological role, functions in the N-end rule pathway of protein degradation where it conjugates Leu, Phe and, less efficiently, Met from aminoacyl-tRNAs to the N-termini of proteins containing an N-terminal arginine or lysine. In Nostoc sp. (strain PCC 7120 / SAG 25.82 / UTEX 2576), this protein is Leucyl/phenylalanyl-tRNA--protein transferase.